We begin with the raw amino-acid sequence, 521 residues long: Apolipoprotein N-acyltransferase (521 aa).

6 helical membrane passes run valine 27–alanine 47, leucine 64–valine 84, isoleucine 93–valine 113, isoleucine 125–leucine 145, isoleucine 167–leucine 187, and tyrosine 202–phenylalanine 222. The CN hydrolase domain occupies isoleucine 239–leucine 483. Glutamate 281 serves as the catalytic Proton acceptor. The active site involves lysine 344. Cysteine 394 serves as the catalytic Nucleophile. Residues tyrosine 493–phenylalanine 513 form a helical membrane-spanning segment.

The protein belongs to the CN hydrolase family. Apolipoprotein N-acyltransferase subfamily.

The protein localises to the cell inner membrane. It catalyses the reaction N-terminal S-1,2-diacyl-sn-glyceryl-L-cysteinyl-[lipoprotein] + a glycerophospholipid = N-acyl-S-1,2-diacyl-sn-glyceryl-L-cysteinyl-[lipoprotein] + a 2-acyl-sn-glycero-3-phospholipid + H(+). It participates in protein modification; lipoprotein biosynthesis (N-acyl transfer). Its function is as follows. Catalyzes the phospholipid dependent N-acylation of the N-terminal cysteine of apolipoprotein, the last step in lipoprotein maturation. In Geobacter metallireducens (strain ATCC 53774 / DSM 7210 / GS-15), this protein is Apolipoprotein N-acyltransferase.